Reading from the N-terminus, the 564-residue chain is Isopullulanase (564 aa).

The N-terminal stretch at 1 to 19 (MRSTGYLLTLSAAFQVAQA) is a signal peptide. N-linked (GlcNAc...) asparagine glycosylation is found at Asn24, Asn94, Asn115, Asn138, Asn186, Asn210, Asn305, Asn381, Asn448, Asn455, Asn460, Asn486, Asn491, Asn503, and Asn535.

N-glycosylated.

Its subcellular location is the secreted. The enzyme catalyses Hydrolysis of pullulan to isopanose (6-alpha-maltosylglucose).. Hydrolyzes pullulan, a linear polymer which is composed of maltotriose units with alpha-1,6 glucosidic linkages, to produce isopanose (Glca1-4Glca1-6Glc). The chain is Isopullulanase (ipuA) from Aspergillus niger.